The following is a 296-amino-acid chain: Chondrolectin (296 aa).

An N-terminal signal peptide occupies residues 1–20 (MRATLRILCALTFLVSCSRG). The Extracellular segment spans residues 21-238 (ARVVSGQTVC…RLIIAGPSSM (218 aa)). The C-type lectin domain maps to 38-187 (CYKIAYFKDV…CNMKHNFICK (150 aa)). Basic and acidic residues predominate over residues 197–221 (VQSDRPGGHDVDLSTEDKEDRRTPP). The interval 197–229 (VQSDRPGGHDVDLSTEDKEDRRTPPTDEDESPR) is disordered. The helical transmembrane segment at 239–266 (LLIYVIIPTIPLLLLILVASGTCCFQML) threads the bilayer. The Cytoplasmic portion of the chain corresponds to 267–296 (SKSKPRTKTSVNQSTLWISKTPKIDSGMEV).

As to expression, expressed in developing motor neurons.

The protein localises to the membrane. Its function is as follows. Plays a role in the development of the nervous system such as in neurite outgrowth and elongation. Involved in motor axon growth and guidance. Required for correct interactions of motor axons with the horizontal myoseptum. This is Chondrolectin (chodl) from Danio rerio (Zebrafish).